The primary structure comprises 326 residues: Glyoxylate/hydroxypyruvate reductase B (326 aa).

Catalysis depends on residues Arg-237 and Glu-266. His-285 functions as the Proton donor in the catalytic mechanism.

This sequence belongs to the D-isomer specific 2-hydroxyacid dehydrogenase family. GhrB subfamily. As to quaternary structure, homodimer.

The protein localises to the cytoplasm. The catalysed reaction is glycolate + NADP(+) = glyoxylate + NADPH + H(+). It carries out the reaction (R)-glycerate + NAD(+) = 3-hydroxypyruvate + NADH + H(+). It catalyses the reaction (R)-glycerate + NADP(+) = 3-hydroxypyruvate + NADPH + H(+). Functionally, catalyzes the NADPH-dependent reduction of glyoxylate and hydroxypyruvate into glycolate and glycerate, respectively. This Yersinia enterocolitica serotype O:8 / biotype 1B (strain NCTC 13174 / 8081) protein is Glyoxylate/hydroxypyruvate reductase B.